We begin with the raw amino-acid sequence, 383 residues long: Cell division protein FtsZ (383 aa).

GTP-binding positions include 20–24, 107–109, glutamate 138, arginine 142, and asparagine 186; these read GGGGN and GTG.

This sequence belongs to the FtsZ family. Homodimer. Polymerizes to form a dynamic ring structure in a strictly GTP-dependent manner. Interacts directly with several other division proteins.

Its subcellular location is the cytoplasm. Functionally, essential cell division protein that forms a contractile ring structure (Z ring) at the future cell division site. The regulation of the ring assembly controls the timing and the location of cell division. One of the functions of the FtsZ ring is to recruit other cell division proteins to the septum to produce a new cell wall between the dividing cells. Binds GTP and shows GTPase activity. In Escherichia coli O157:H7, this protein is Cell division protein FtsZ.